The following is a 340-amino-acid chain: Protein RecA (340 aa).

65-72 lines the ATP pocket; the sequence is GPESGGKT.

It belongs to the RecA family.

Its subcellular location is the cytoplasm. Its function is as follows. Can catalyze the hydrolysis of ATP in the presence of single-stranded DNA, the ATP-dependent uptake of single-stranded DNA by duplex DNA, and the ATP-dependent hybridization of homologous single-stranded DNAs. It interacts with LexA causing its activation and leading to its autocatalytic cleavage. In Thermus thermophilus (strain ATCC 27634 / DSM 579 / HB8), this protein is Protein RecA.